The primary structure comprises 189 residues: dCTP deaminase (189 aa).

DCTP-binding positions include 112–117, 136–138, Gln157, Tyr171, and Gln181; these read KSTYAR and TLE. Residue Glu138 is the Proton donor/acceptor of the active site.

It belongs to the dCTP deaminase family. As to quaternary structure, homotrimer.

It catalyses the reaction dCTP + H2O + H(+) = dUTP + NH4(+). The protein operates within pyrimidine metabolism; dUMP biosynthesis; dUMP from dCTP (dUTP route): step 1/2. Its function is as follows. Catalyzes the deamination of dCTP to dUTP. In Burkholderia mallei (strain NCTC 10247), this protein is dCTP deaminase.